The following is a 338-amino-acid chain: Protein mono-ADP-ribosyltransferase PARP11 (338 aa).

E13 is modified (ADP-ribosyl glutamic acid). Position 18 is an N6-(ADP-ribosyl)lysine (K18). Residues 22–106 form the WWE domain; that stretch reads NEVDDMDTSD…TTGKQRLIKR (85 aa). C56 and C72 each carry ADP-ribosylcysteine. D87 bears the ADP-ribosyl aspartic acid mark. The 216-residue stretch at 123 to 338 folds into the PARP catalytic domain; that stretch reads IPMPPHWENV…IYPEYLIDFH (216 aa).

It belongs to the ARTD/PARP family. As to quaternary structure, interacts with PARP12; this interaction plays a role in zika virus suppression. Auto-mono-ADP-ribosylated.

The protein resides in the nucleus. It localises to the nuclear pore complex. The catalysed reaction is L-aspartyl-[protein] + NAD(+) = 4-O-(ADP-D-ribosyl)-L-aspartyl-[protein] + nicotinamide. It catalyses the reaction L-cysteinyl-[protein] + NAD(+) = S-(ADP-D-ribosyl)-L-cysteinyl-[protein] + nicotinamide + H(+). The enzyme catalyses L-glutamyl-[protein] + NAD(+) = 5-O-(ADP-D-ribosyl)-L-glutamyl-[protein] + nicotinamide. It carries out the reaction L-lysyl-[protein] + NAD(+) = N(6)-(ADP-D-ribosyl)-L-lysyl-[protein] + nicotinamide + H(+). Its function is as follows. Mono-ADP-ribosyltransferase that mediates mono-ADP-ribosylation of target proteins. Plays a role in nuclear envelope stability and nuclear remodeling during spermiogenesis. Inhibits the type I interferon activated signaling pathway. Mechanistically, mono-ADP-ribosylates beta-TrCP/BTRC to promote IFNAR1 ubiquitination and protect BTRC from ubiquitin-proteasome degradation. Additionally, acts as an antiviral factor by cooperating with PARP12 to suppress Zika virus replication, independent of IFNAR1 regulation or intrinsic PARP enzymatic activity. Instead, facilitates the degradation of viral NS1 and NS3 proteins, potentially disrupting viral replication. In Homo sapiens (Human), this protein is Protein mono-ADP-ribosyltransferase PARP11.